Here is a 254-residue protein sequence, read N- to C-terminus: Flavin-dependent thymidylate synthase (254 aa).

The region spanning 7–237 (LRVQLIARTE…PAVFADFEIY (231 aa)) is the ThyX domain. FAD-binding positions include serine 71, 95-97 (RHR), and glutamine 103. DUMP-binding positions include 92 to 95 (ELIR), 103 to 107 (QLSQR), and arginine 176. The ThyX motif signature appears at 95-105 (RHRHFSYSQLS). FAD-binding positions include 192–194 (NYR) and histidine 198. Residue arginine 203 participates in dUMP binding. The active-site Involved in ionization of N3 of dUMP, leading to its activation is the arginine 203.

The protein belongs to the thymidylate synthase ThyX family. As to quaternary structure, homotetramer. It depends on FAD as a cofactor.

It catalyses the reaction dUMP + (6R)-5,10-methylene-5,6,7,8-tetrahydrofolate + NADPH + H(+) = dTMP + (6S)-5,6,7,8-tetrahydrofolate + NADP(+). It functions in the pathway pyrimidine metabolism; dTTP biosynthesis. In terms of biological role, catalyzes the reductive methylation of 2'-deoxyuridine-5'-monophosphate (dUMP) to 2'-deoxythymidine-5'-monophosphate (dTMP) while utilizing 5,10-methylenetetrahydrofolate (mTHF) as the methyl donor, and NADPH and FADH(2) as the reductant. This Mycobacterium sp. (strain KMS) protein is Flavin-dependent thymidylate synthase.